The sequence spans 79 residues: ATP synthase subunit c (79 aa).

2 consecutive transmembrane segments (helical) span residues 11–31 (MAAAVMMGLAAIGAAIGIGIL) and 53–73 (FFIVMGLVDAIPMIAVGLGLY).

Belongs to the ATPase C chain family. F-type ATPases have 2 components, F(1) - the catalytic core - and F(0) - the membrane proton channel. F(1) has five subunits: alpha(3), beta(3), gamma(1), delta(1), epsilon(1). F(0) has three main subunits: a(1), b(2) and c(10-14). The alpha and beta chains form an alternating ring which encloses part of the gamma chain. F(1) is attached to F(0) by a central stalk formed by the gamma and epsilon chains, while a peripheral stalk is formed by the delta and b chains.

It localises to the cell inner membrane. Functionally, f(1)F(0) ATP synthase produces ATP from ADP in the presence of a proton or sodium gradient. F-type ATPases consist of two structural domains, F(1) containing the extramembraneous catalytic core and F(0) containing the membrane proton channel, linked together by a central stalk and a peripheral stalk. During catalysis, ATP synthesis in the catalytic domain of F(1) is coupled via a rotary mechanism of the central stalk subunits to proton translocation. In terms of biological role, key component of the F(0) channel; it plays a direct role in translocation across the membrane. A homomeric c-ring of between 10-14 subunits forms the central stalk rotor element with the F(1) delta and epsilon subunits. The polypeptide is ATP synthase subunit c (Citrobacter koseri (strain ATCC BAA-895 / CDC 4225-83 / SGSC4696)).